The sequence spans 770 residues: uncharacterized protein (770 aa).

The signal sequence occupies residues 1–24 (MVSAAWLRYPSLLTLGILVSRVAA). 4 N-linked (GlcNAc...) asparagine glycosylation sites follow: Asn78, Asn204, Asn533, and Asn638. A disordered region spans residues 746–770 (SWGTGQNDVPPSLGAGIKRDGLRFT).

Belongs to the glycosyl hydrolase 92 family.

It localises to the secreted. This is an uncharacterized protein from Arthroderma benhamiae (strain ATCC MYA-4681 / CBS 112371) (Trichophyton mentagrophytes).